A 300-amino-acid polypeptide reads, in one-letter code: NAD kinase (300 aa).

The active-site Proton acceptor is the D75. Residues 75–76, 149–150, R177, D179, 190–195, A214, and Q248 each bind NAD(+); these read DG, ND, and TAYALS.

The protein belongs to the NAD kinase family. The cofactor is a divalent metal cation.

The protein localises to the cytoplasm. It catalyses the reaction NAD(+) + ATP = ADP + NADP(+) + H(+). Its function is as follows. Involved in the regulation of the intracellular balance of NAD and NADP, and is a key enzyme in the biosynthesis of NADP. Catalyzes specifically the phosphorylation on 2'-hydroxyl of the adenosine moiety of NAD to yield NADP. The polypeptide is NAD kinase (Paraburkholderia phytofirmans (strain DSM 17436 / LMG 22146 / PsJN) (Burkholderia phytofirmans)).